The following is a 362-amino-acid chain: 3-dehydroquinate synthase (362 aa).

NAD(+) contacts are provided by residues 71–76, 105–109, 129–130, Lys-142, Lys-151, and 169–172; these read DGEQYK, GVVGD, TT, and CLKT. The Zn(2+) site is built by Glu-184, His-247, and His-264.

The protein belongs to the sugar phosphate cyclases superfamily. Dehydroquinate synthase family. It depends on Co(2+) as a cofactor. Zn(2+) is required as a cofactor. The cofactor is NAD(+).

The protein resides in the cytoplasm. It catalyses the reaction 7-phospho-2-dehydro-3-deoxy-D-arabino-heptonate = 3-dehydroquinate + phosphate. It functions in the pathway metabolic intermediate biosynthesis; chorismate biosynthesis; chorismate from D-erythrose 4-phosphate and phosphoenolpyruvate: step 2/7. Catalyzes the conversion of 3-deoxy-D-arabino-heptulosonate 7-phosphate (DAHP) to dehydroquinate (DHQ). The protein is 3-dehydroquinate synthase of Shigella dysenteriae serotype 1 (strain Sd197).